We begin with the raw amino-acid sequence, 284 residues long: Bifunctional protein FolD (284 aa).

Residues 165–167 (GAS), Ser-190, and Ile-231 contribute to the NADP(+) site.

It belongs to the tetrahydrofolate dehydrogenase/cyclohydrolase family. As to quaternary structure, homodimer.

It catalyses the reaction (6R)-5,10-methylene-5,6,7,8-tetrahydrofolate + NADP(+) = (6R)-5,10-methenyltetrahydrofolate + NADPH. The catalysed reaction is (6R)-5,10-methenyltetrahydrofolate + H2O = (6R)-10-formyltetrahydrofolate + H(+). It functions in the pathway one-carbon metabolism; tetrahydrofolate interconversion. Its function is as follows. Catalyzes the oxidation of 5,10-methylenetetrahydrofolate to 5,10-methenyltetrahydrofolate and then the hydrolysis of 5,10-methenyltetrahydrofolate to 10-formyltetrahydrofolate. This chain is Bifunctional protein FolD, found in Bordetella avium (strain 197N).